The chain runs to 401 residues: Argininosuccinate synthase (401 aa).

Ala-9–Ser-17 provides a ligand contact to ATP. Tyr-86 serves as a coordination point for L-citrulline. Gly-116 lines the ATP pocket. Positions 118, 122, and 123 each coordinate L-aspartate. Position 122 (Asn-122) interacts with L-citrulline. 5 residues coordinate L-citrulline: Arg-126, Ser-174, Ser-183, Glu-259, and Tyr-271.

Belongs to the argininosuccinate synthase family. Type 1 subfamily. Homotetramer.

Its subcellular location is the cytoplasm. The catalysed reaction is L-citrulline + L-aspartate + ATP = 2-(N(omega)-L-arginino)succinate + AMP + diphosphate + H(+). It functions in the pathway amino-acid biosynthesis; L-arginine biosynthesis; L-arginine from L-ornithine and carbamoyl phosphate: step 2/3. The protein is Argininosuccinate synthase of Bacillus cereus (strain B4264).